Here is a 114-residue protein sequence, read N- to C-terminus: Mobility group protein 1A (114 aa).

The segment at residues 5 to 71 (PKRPLSAYML…EYEKAMKEFE (67 aa)) is a DNA-binding region (HMG box). Residues 69-114 (EFERNGGDKSSGASTKKRGKAAEKKKPAKKSKKKDSEDDEEEDESD) form a disordered region. The span at 105 to 114 (EDDEEEDESD) shows a compositional bias: acidic residues.

Belongs to the HMGB family.

Its subcellular location is the nucleus. The protein resides in the chromosome. Its function is as follows. Found in condensed chromomeres. Binds preferentially to AT-rich DNA. This chain is Mobility group protein 1A (HMG1A), found in Chironomus tentans (Midge).